An 837-amino-acid chain; its full sequence is Toll-like receptor 4 (837 aa).

An N-terminal signal peptide occupies residues 1-23 (MMSASRLAGTLIPAMAFLSCVRP). Topologically, residues 24–629 (ESWEPCVVPN…SLNITCQMNK (606 aa)) are extracellular. Cys29 and Cys38 are disulfide-bonded. N-linked (GlcNAc...) asparagine glycosylation is present at Asn33. 5 LRR repeats span residues 53 to 74 (STKN…SFFS), 77 to 98 (ELQV…AYQS), 101 to 122 (HLST…AFSG), 125 to 146 (SLQK…PIGH), and 149 to 170 (TLKE…EYFS). The N-linked (GlcNAc...) asparagine glycan is linked to Asn171. 3 LRR repeats span residues 174-197 (NLEY…RVLH), 203-223 (NLSL…AFKE), and 225-245 (RLHK…KTCI). Asn203 is a glycosylation site (N-linked (GlcNAc...) asparagine). A disulfide bridge connects residues Cys279 and Cys304. Asn280 and Asn307 each carry an N-linked (GlcNAc...) asparagine glycan. LRR repeat units follow at residues 329–349 (GWQH…LKLK), 350–371 (SLKR…VDLP), 372–392 (SLEF…CSQS), 398–420 (SLKY…LGLE), 421–442 (QLEH…SVFL), 446–454 (NLIYLDISH), 470–493 (SLEV…FTEL), 495–516 (NLTF…AFNS), 519–540 (SLQV…PYKC), and 543–563 (SLRV…QELQ). Residues Cys388 and Cys389 are joined by a disulfide bond. Residues Asn495 and Asn524 are each glycosylated (N-linked (GlcNAc...) asparagine). The N-linked (GlcNAc...) asparagine glycan is linked to Asn573. The 51-residue stretch at 577-627 (NDFACTCEHQSFLQWIKDQRQLLVEVERMECATPSDKQGMPVLSLNITCQM) folds into the LRRCT domain. 2 cysteine pairs are disulfide-bonded: Cys581/Cys607 and Cys583/Cys625. N-linked (GlcNAc...) asparagine glycans are attached at residues Asn622 and Asn628. A helical membrane pass occupies residues 630 to 650 (TIIGVSVLSVLVVSVVAVLVY). At 651–837 (KFYFHLMLLA…GCNWQEATSI (187 aa)) the chain is on the cytoplasmic side. One can recognise a TIR domain in the interval 670–813 (NVYDAFVIYS…IFWRRLRKAL (144 aa)).

Belongs to the Toll-like receptor family. As to quaternary structure, belongs to the lipopolysaccharide (LPS) receptor, a multi-protein complex containing at least CD14, LY96 and TLR4. Binding to bacterial LPS leads to homodimerization. Interacts with LY96 via the extracellular domain. Interacts with MYD88 and TIRAP via their respective TIR domains. Interacts with TICAM2. Interacts with NOX4. Interacts with CNPY3 and HSP90B1; this interaction is required for proper folding in the endoplasmic reticulum. Interacts with MAP3K21; this interaction leads to negative regulation of TLR4 signaling. Interacts with CD36, following CD36 stimulation by oxLDL or amyloid-beta 42, and forms a heterodimer with TLR6. The trimeric complex is internalized and triggers inflammatory response. LYN kinase activity facilitates TLR4-TLR6 heterodimerization and signal initiation. Interacts with TICAM1 in response to LPS in a WDFY1-dependent manner. Interacts with WDFY1 in response to LPS. Interacts with SMPDL3B. Interacts with CEACAM1; upon lipopolysaccharide stimulation, forms a complex including TLR4 and the phosphorylated form of SYK and CEACAM1, which in turn, recruits PTPN6 that dephosphorylates SYK, reducing the production of reactive oxygen species (ROS) and lysosome disruption, which in turn, reduces the activity of the inflammasome. Interacts with RFTN1; the interaction occurs in response to lipopolysaccharide stimulation. Interacts with SCIMP; the interaction occurs in response to lipopolysaccharide stimulation and is enhanced by phosphorylation of SCIMP by LYN. This interaction facilitates the phosphorylation of TLR4 by LYN which elicits a selective cytokine response in macrophages. Interacts with TRAF3IP3. Interacts with TREM1; this interaction enhances TLR4-mediated inflammatory response. Interacts with ZG16B/PAUF. Interacts with CD82; this interaction inhibits TLR4-mediated signaling pathway. Post-translationally, phosphorylated on tyrosine residues by LYN after binding lipopolysaccharide. Ubiquitinated by RNF128 via 'Lys-28'-linked polyubiquitin chains, leading to proteasomal degradation.

It is found in the cell membrane. The protein resides in the early endosome. It localises to the cell projection. The protein localises to the ruffle. Functionally, transmembrane receptor that functions as a pattern recognition receptor recognizing pathogen- and damage-associated molecular patterns (PAMPs and DAMPs) to induce innate immune responses via downstream signaling pathways. At the plasma membrane, cooperates with LY96 to mediate the innate immune response to bacterial lipopolysaccharide (LPS). Also involved in LPS-independent inflammatory responses triggered by free fatty acids, such as palmitate, and Ni(2+). Mechanistically, acts via MYD88, TIRAP and TRAF6, leading to NF-kappa-B activation, cytokine secretion and the inflammatory response. Alternatively, CD14-mediated TLR4 internalization via endocytosis is associated with the initiation of a MYD88-independent signaling via the TICAM1-TBK1-IRF3 axis leading to type I interferon production. In addition to the secretion of proinflammatory cytokines, initiates the activation of NLRP3 inflammasome and formation of a positive feedback loop between autophagy and NF-kappa-B signaling cascade. In complex with TLR6, promotes inflammation in monocytes/macrophages by associating with TLR6 and the receptor CD86. Upon ligand binding, such as oxLDL or amyloid-beta 42, the TLR4:TLR6 complex is internalized and triggers inflammatory response, leading to NF-kappa-B-dependent production of CXCL1, CXCL2 and CCL9 cytokines, via MYD88 signaling pathway, and CCL5 cytokine, via TICAM1 signaling pathway. In myeloid dendritic cells, vesicular stomatitis virus glycoprotein G but not LPS promotes the activation of IRF7, leading to type I IFN production in a CD14-dependent manner. This chain is Toll-like receptor 4 (TLR4), found in Gorilla gorilla gorilla (Western lowland gorilla).